Consider the following 252-residue polypeptide: Ubiquinone biosynthesis protein COQ4 homolog 1, mitochondrial (252 aa).

Zn(2+) is bound by residues histidine 130, aspartate 131, histidine 134, and glutamate 146.

The protein belongs to the COQ4 family. In terms of assembly, component of a multi-subunit COQ enzyme complex. Zn(2+) serves as cofactor.

The protein localises to the mitochondrion inner membrane. The catalysed reaction is a 4-hydroxy-3-methoxy-5-(all-trans-polyprenyl)benzoate + H(+) = a 2-methoxy-6-(all-trans-polyprenyl)phenol + CO2. It functions in the pathway cofactor biosynthesis; ubiquinone biosynthesis. Its function is as follows. Lyase that catalyzes the C1-decarboxylation of 4-hydroxy-3-methoxy-5-(all-trans-polyprenyl)benzoic acid into 2-methoxy-6-(all-trans-polyprenyl)phenol during ubiquinone biosynthesis. In Trypanosoma cruzi (strain CL Brener), this protein is Ubiquinone biosynthesis protein COQ4 homolog 1, mitochondrial.